The sequence spans 159 residues: MCENEKERTLVIIKPDAVIRGLIGEIISRFEKRGLKIVGMKMIWISKELAEKHYAEHREKPFFKSLVEYITRTPVVVMVVEGRCAIEVVRKMAGATDPKNAEPGTIRGDFALEVSDAICNVVHASDSKESAEREIKLYFRDDEIFDYPRAEDWFYRKGI.

ATP is bound by residues K14, F62, R90, T96, and R107. The Pros-phosphohistidine intermediate role is filled by H123.

The protein belongs to the NDK family. Mg(2+) serves as cofactor.

It is found in the cytoplasm. The catalysed reaction is a 2'-deoxyribonucleoside 5'-diphosphate + ATP = a 2'-deoxyribonucleoside 5'-triphosphate + ADP. It carries out the reaction a ribonucleoside 5'-diphosphate + ATP = a ribonucleoside 5'-triphosphate + ADP. In terms of biological role, major role in the synthesis of nucleoside triphosphates other than ATP. The ATP gamma phosphate is transferred to the NDP beta phosphate via a ping-pong mechanism, using a phosphorylated active-site intermediate. The chain is Nucleoside diphosphate kinase from Pyrococcus abyssi (strain GE5 / Orsay).